The primary structure comprises 75 residues: Small ribosomal subunit protein bS18 (75 aa).

It belongs to the bacterial ribosomal protein bS18 family. Part of the 30S ribosomal subunit. Forms a tight heterodimer with protein bS6.

Its function is as follows. Binds as a heterodimer with protein bS6 to the central domain of the 16S rRNA, where it helps stabilize the platform of the 30S subunit. In Shewanella denitrificans (strain OS217 / ATCC BAA-1090 / DSM 15013), this protein is Small ribosomal subunit protein bS18.